The following is a 386-amino-acid chain: Succinate--CoA ligase [ADP-forming] subunit beta (386 aa).

Residues 9-244 enclose the ATP-grasp domain; it reads KELLRKYGVV…FDEEDADEIE (236 aa). ATP contacts are provided by residues Lys46, 53 to 55, Glu99, Ala102, and Glu107; that span reads GRG. Asn199 and Asp213 together coordinate Mg(2+). Substrate-binding positions include Asn264 and 321–323; that span reads GIM.

The protein belongs to the succinate/malate CoA ligase beta subunit family. Heterotetramer of two alpha and two beta subunits. Requires Mg(2+) as cofactor.

It carries out the reaction succinate + ATP + CoA = succinyl-CoA + ADP + phosphate. The enzyme catalyses GTP + succinate + CoA = succinyl-CoA + GDP + phosphate. The protein operates within carbohydrate metabolism; tricarboxylic acid cycle; succinate from succinyl-CoA (ligase route): step 1/1. Functionally, succinyl-CoA synthetase functions in the citric acid cycle (TCA), coupling the hydrolysis of succinyl-CoA to the synthesis of either ATP or GTP and thus represents the only step of substrate-level phosphorylation in the TCA. The beta subunit provides nucleotide specificity of the enzyme and binds the substrate succinate, while the binding sites for coenzyme A and phosphate are found in the alpha subunit. The chain is Succinate--CoA ligase [ADP-forming] subunit beta from Aromatoleum aromaticum (strain DSM 19018 / LMG 30748 / EbN1) (Azoarcus sp. (strain EbN1)).